A 394-amino-acid chain; its full sequence is Elongation factor Tu (394 aa).

One can recognise a tr-type G domain in the interval Lys10–Glu204. Residues Gly19–Thr26 are G1. Residue Gly19–Thr26 participates in GTP binding. Thr26 serves as a coordination point for Mg(2+). The G2 stretch occupies residues Gly60–Asn64. The G3 stretch occupies residues Asp81 to Gly84. GTP is bound by residues Asp81–His85 and Asn136–Asp139. A G4 region spans residues Asn136–Asp139. Residues Ser174–Leu176 form a G5 region.

Belongs to the TRAFAC class translation factor GTPase superfamily. Classic translation factor GTPase family. EF-Tu/EF-1A subfamily. In terms of assembly, monomer.

Its subcellular location is the cytoplasm. The catalysed reaction is GTP + H2O = GDP + phosphate + H(+). GTP hydrolase that promotes the GTP-dependent binding of aminoacyl-tRNA to the A-site of ribosomes during protein biosynthesis. In Enterobacter sp. (strain 638), this protein is Elongation factor Tu.